The sequence spans 191 residues: Large ribosomal subunit protein uL6 (191 aa).

Belongs to the universal ribosomal protein uL6 family. In terms of assembly, part of the 50S ribosomal subunit.

This protein binds to the 23S rRNA, and is important in its secondary structure. It is located near the subunit interface in the base of the L7/L12 stalk, and near the tRNA binding site of the peptidyltransferase center. This chain is Large ribosomal subunit protein uL6, found in Gloeobacter violaceus (strain ATCC 29082 / PCC 7421).